The primary structure comprises 264 residues: Phosphonoacetaldehyde hydrolase (264 aa).

The active-site Nucleophile is aspartate 9. Residues aspartate 9 and alanine 11 each contribute to the Mg(2+) site. The active-site Schiff-base intermediate with substrate is lysine 50. Residue aspartate 183 participates in Mg(2+) binding.

It belongs to the HAD-like hydrolase superfamily. PhnX family. In terms of assembly, homodimer. The cofactor is Mg(2+).

It carries out the reaction phosphonoacetaldehyde + H2O = acetaldehyde + phosphate + H(+). Its function is as follows. Involved in phosphonate degradation. The protein is Phosphonoacetaldehyde hydrolase of Bacillus thuringiensis (strain Al Hakam).